The chain runs to 317 residues: Acetyl-coenzyme A carboxylase carboxyl transferase subunit alpha (317 aa).

Residues Leu40 to Ser293 enclose the CoA carboxyltransferase C-terminal domain.

The protein belongs to the AccA family. In terms of assembly, acetyl-CoA carboxylase is a heterohexamer composed of biotin carboxyl carrier protein (AccB), biotin carboxylase (AccC) and two subunits each of ACCase subunit alpha (AccA) and ACCase subunit beta (AccD).

The protein resides in the cytoplasm. It carries out the reaction N(6)-carboxybiotinyl-L-lysyl-[protein] + acetyl-CoA = N(6)-biotinyl-L-lysyl-[protein] + malonyl-CoA. Its pathway is lipid metabolism; malonyl-CoA biosynthesis; malonyl-CoA from acetyl-CoA: step 1/1. In terms of biological role, component of the acetyl coenzyme A carboxylase (ACC) complex. First, biotin carboxylase catalyzes the carboxylation of biotin on its carrier protein (BCCP) and then the CO(2) group is transferred by the carboxyltransferase to acetyl-CoA to form malonyl-CoA. The sequence is that of Acetyl-coenzyme A carboxylase carboxyl transferase subunit alpha from Brucella melitensis biotype 2 (strain ATCC 23457).